A 43-amino-acid chain; its full sequence is uncharacterized protein (43 aa).

This sequence belongs to the ELIP/psbS family.

Its subcellular location is the plastid. The protein localises to the chloroplast. In terms of biological role, possible role in chlorophyll and/or carotenoid binding. This is an uncharacterized protein from Cyanidium caldarium (Red alga).